A 204-amino-acid chain; its full sequence is Somatotropin (204 aa).

The first 17 residues, methionine 1–serine 17, serve as a signal peptide directing secretion. Glutamine 18 bears the Pyrrolidone carboxylic acid mark. Histidine 36 is a binding site for Zn(2+). A disulfide bridge connects residues cysteine 69 and cysteine 177. Glutamate 186 is a Zn(2+) binding site. Cysteines 194 and 202 form a disulfide.

The protein belongs to the somatotropin/prolactin family.

It localises to the secreted. Its function is as follows. Growth hormone plays an important role in growth control and is involved in the regulation of several anabolic processes. Implicated as an osmoregulatory substance important for seawater adaptation. This chain is Somatotropin (gh), found in Sparus aurata (Gilthead sea bream).